A 177-amino-acid polypeptide reads, in one-letter code: Large ribosomal subunit protein uL6 (177 aa).

Belongs to the universal ribosomal protein uL6 family. Part of the 50S ribosomal subunit.

Its function is as follows. This protein binds to the 23S rRNA, and is important in its secondary structure. It is located near the subunit interface in the base of the L7/L12 stalk, and near the tRNA binding site of the peptidyltransferase center. In Pseudomonas putida (strain ATCC 700007 / DSM 6899 / JCM 31910 / BCRC 17059 / LMG 24140 / F1), this protein is Large ribosomal subunit protein uL6.